We begin with the raw amino-acid sequence, 81 residues long: Conotoxin Lt6.4 (81 aa).

The N-terminal stretch at 1-19 is a signal peptide; sequence MKLVLAIVLILMFLSLSAG. Residues 20–42 constitute a propeptide that is removed on maturation; sequence AETSDNGVSRGGHRPQYWPVTPP. 3 cysteine pairs are disulfide-bonded: Cys-46-Cys-60, Cys-53-Cys-65, and Cys-59-Cys-80.

Belongs to the conotoxin I3 superfamily. As to expression, expressed by the venom duct.

It is found in the secreted. This Conus litteratus (Lettered cone) protein is Conotoxin Lt6.4.